Here is a 356-residue protein sequence, read N- to C-terminus: MLKVPLSDVLSQKMLFLKSFRYFHCTKYFSRDNASSTTDIFRNAMKRKRELANLKEQSHGNVARNAAFPKEYIKRPKQVPRNATNRKKILITWSTGTDRAKEAANSVVSEIFKKNHKGNIKVVDPTTHRIEASNIRYFAKGIDLDKVGLSIVNVEQIDNENQIPLVKIVESRVALKKYSDFLAKKKEKELMELGVLNKSYKNLVTDKKEDNLKHIKISWQIESDDLKRQKAHEIVSLLKKGNKVTLYLDDKNNINSNNWLENFEELDRSQKGEPPRLPESVFQKRAAVLETLKEIVSEYANDPVLLGNMNSKMIMKLIPKDVKPQNNDKRALKELRKKERQEKLQKRIQRKKMNEM.

The N-terminal 32 residues, 1–32, are a transit peptide targeting the mitochondrion; the sequence is MLKVPLSDVLSQKMLFLKSFRYFHCTKYFSRD.

This sequence belongs to the AIM23 family.

It is found in the mitochondrion. This chain is Altered inheritance of mitochondria protein 23, mitochondrial (AIM23), found in Saccharomyces cerevisiae (strain ATCC 204508 / S288c) (Baker's yeast).